The sequence spans 932 residues: Protein translocase subunit SecA (932 aa).

Residues glutamine 90, 108–112 (GEGKT), and aspartate 498 contribute to the ATP site.

This sequence belongs to the SecA family. In terms of assembly, monomer and homodimer. Part of the essential Sec protein translocation apparatus which comprises SecA, SecYEG and auxiliary proteins SecDF. Other proteins may also be involved.

Its subcellular location is the cell inner membrane. The protein localises to the cellular thylakoid membrane. The protein resides in the cytoplasm. It catalyses the reaction ATP + H2O + cellular proteinSide 1 = ADP + phosphate + cellular proteinSide 2.. Functionally, part of the Sec protein translocase complex. Interacts with the SecYEG preprotein conducting channel. Has a central role in coupling the hydrolysis of ATP to the transfer of proteins into and across the cell membrane, serving as an ATP-driven molecular motor driving the stepwise translocation of polypeptide chains across the membrane. Its function is as follows. Probably participates in protein translocation into and across both the cytoplasmic and thylakoid membranes in cyanobacterial cells. The sequence is that of Protein translocase subunit SecA from Synechocystis sp. (strain ATCC 27184 / PCC 6803 / Kazusa).